The sequence spans 380 residues: Alanine racemase (380 aa).

Residue K41 is the Proton acceptor; specific for D-alanine of the active site. K41 is modified (N6-(pyridoxal phosphate)lysine). R141 lines the substrate pocket. Y271 (proton acceptor; specific for L-alanine) is an active-site residue. Residue M318 coordinates substrate.

The protein belongs to the alanine racemase family. The cofactor is pyridoxal 5'-phosphate.

It catalyses the reaction L-alanine = D-alanine. It participates in amino-acid biosynthesis; D-alanine biosynthesis; D-alanine from L-alanine: step 1/1. Catalyzes the interconversion of L-alanine and D-alanine. May also act on other amino acids. The sequence is that of Alanine racemase (alr) from Latilactobacillus sakei subsp. sakei (strain 23K) (Lactobacillus sakei subsp. sakei).